The chain runs to 1161 residues: Integrin alpha-D (1161 aa).

The first 17 residues, 1 to 17 (MTFGTVLLLSVLASYHG), serve as a signal peptide directing secretion. Residues 18–1099 (FNLDVEEPTI…MVLEEDEVYN (1082 aa)) lie on the Extracellular side of the membrane. 2 FG-GAP repeats span residues 19–76 (NLDV…MCQP) and 77–136 (IPLH…IIQT). An N-linked (GlcNAc...) asparagine glycan is attached at Asn-59. Cys-67 and Cys-74 form a disulfide bridge. 2 N-linked (GlcNAc...) asparagine glycosylation sites follow: Asn-87 and Asn-99. Cys-106 and Cys-124 form a disulfide bridge. Positions 150 to 332 (DIVFLIDGSG…SIQKQLQEKI (183 aa)) constitute a VWFA domain. FG-GAP repeat units lie at residues 339-390 (QSRA…PTFI), 391-442 (NMSQ…SRQW), 443-503 (RKKA…RVQW), 506-564 (DAVL…SGIS), and 569-629 (QRIA…FSPV). The N-linked (GlcNAc...) asparagine glycan is linked to Asn-391. Residues Asp-465, Asp-467, Asp-469, Asp-473, Asp-529, Asn-531, Asp-533, Asp-537, Asp-592, Asp-596, and Asp-600 each contribute to the Ca(2+) site. A disulfide bond links Cys-654 and Cys-709. N-linked (GlcNAc...) asparagine glycans are attached at residues Asn-690 and Asn-732. Cystine bridges form between Cys-768–Cys-774 and Cys-845–Cys-860. 2 N-linked (GlcNAc...) asparagine glycosylation sites follow: Asn-872 and Asn-956. Intrachain disulfides connect Cys-993-Cys-1017 and Cys-1022-Cys-1027. N-linked (GlcNAc...) asparagine glycosylation is present at Asn-1045. The helical transmembrane segment at 1100-1120 (AIPIIMGSSVGALLLLALITA) threads the bilayer. The Cytoplasmic segment spans residues 1121–1161 (TLYKLGFFKRHYKEMLEDKPEDTATFSGDDFSCVAPNVPLS). The GFFKR motif motif lies at 1126–1130 (GFFKR).

The protein belongs to the integrin alpha chain family. In terms of assembly, heterodimer of an alpha and a beta subunit. Alpha-D associates with beta-2. Expressed moderately on myelomonocytic cell lines and subsets of peripheral blood leukocytes and strongly on tissue-specialized cells, including macrophages foam cells within atherosclerotic plaques, and on splenic red pulp macrophages.

The protein resides in the membrane. Integrin alpha-D/beta-2 is a receptor for ICAM3 and VCAM1. May play a role in the atherosclerotic process such as clearing lipoproteins from plaques and in phagocytosis of blood-borne pathogens, particulate matter, and senescent erythrocytes from the blood. The polypeptide is Integrin alpha-D (ITGAD) (Homo sapiens (Human)).